The primary structure comprises 205 residues: GTP cyclohydrolase-2 (205 aa).

49–53 (RLHSE) provides a ligand contact to GTP. Zn(2+) contacts are provided by cysteine 54, cysteine 65, and cysteine 67. Residues glutamine 70, 92–94 (EGR), and threonine 114 each bind GTP. Residue aspartate 126 is the Proton acceptor of the active site. Catalysis depends on arginine 128, which acts as the Nucleophile. Residues threonine 149 and lysine 154 each contribute to the GTP site.

Belongs to the GTP cyclohydrolase II family. It depends on Zn(2+) as a cofactor.

It catalyses the reaction GTP + 4 H2O = 2,5-diamino-6-hydroxy-4-(5-phosphoribosylamino)-pyrimidine + formate + 2 phosphate + 3 H(+). Its pathway is cofactor biosynthesis; riboflavin biosynthesis; 5-amino-6-(D-ribitylamino)uracil from GTP: step 1/4. Its function is as follows. Catalyzes the conversion of GTP to 2,5-diamino-6-ribosylamino-4(3H)-pyrimidinone 5'-phosphate (DARP), formate and pyrophosphate. The chain is GTP cyclohydrolase-2 from Pseudomonas entomophila (strain L48).